The sequence spans 187 residues: UPF0301 protein VSAL_I0547 (187 aa).

It belongs to the UPF0301 (AlgH) family.

The protein is UPF0301 protein VSAL_I0547 of Aliivibrio salmonicida (strain LFI1238) (Vibrio salmonicida (strain LFI1238)).